Consider the following 159-residue polypeptide: Transcriptional repressor NrdR (159 aa).

A zinc finger spans residues 3–34 (CPFCEYNGTRVLDSRPFNHNKSIRRRRECEAC). Residues 49 to 139 (LLIVKKDGTR…VYRQFKDINV (91 aa)) form the ATP-cone domain.

This sequence belongs to the NrdR family. Zn(2+) serves as cofactor.

Negatively regulates transcription of bacterial ribonucleotide reductase nrd genes and operons by binding to NrdR-boxes. The chain is Transcriptional repressor NrdR from Brevibacillus brevis (strain 47 / JCM 6285 / NBRC 100599).